The primary structure comprises 604 residues: MADPKGSTSKEGFGDWCILEADCSDIENDMEQLFERDTDSDISDLIDDCDLEQGNSLELFHQQECKQSEEQLQKLKRKCLSPKAVAQLSPRLQSISLSPQQKSKRRLFAEQDSGVELTLNNEAEDVTTEVEVPAIDSRPDDEGGSGDVDIHYLSLLRSSNKKATLMAKFKAAFGVGFNELTRQFKSHKTCCNHWVVSVYAVHDDLFESSKQLLQQHCDYLWVRGIDAMSLYLLCFKAGKNRGTVHKLMTSMLNVHEQQILSEPPKLRNTAAALFWYKGCMGSGVFSYGPYPDWIAQQTILGHNNAEASTFDFSQMVQWAFDNQLVDEGDIAYRYARLAPEDANAVAWLAHNSQAKFVRECAAMVRFYKKGQMRDMSMSEWIYTKIHEVEGEGHWSDIVKFLRYQEVNFIMFLAAFKDFLHSKPKKNCILIHGPPNSGKSSFAMSLIRVLKGRVLSFVNSKSQFWLQPLSECKIALIDDVTDPCWLYMDNYLRNGLDGHYVSLDCKYKAPMQTKFPPLLLTSNINVHEEANYRYLHSRIKGFAFPNPFPMKSDDTPQFELTDQSWKSFFERLWTQLELSDQEDEGENGESQRAFQCSAGSANEHL.

The Nuclear localization signal motif lies at 76 to 78 (KRK). Phosphoserine; by host is present on residues S81 and S89. Positions 88–97 (LSPRLQSISL) match the Nuclear export signal motif. Residues 144-307 (GSGDVDIHYL…TILGHNNAEA (164 aa)) are DNA-binding region. One can recognise an SF3 helicase domain in the interval 406–556 (VNFIMFLAAF…FPMKSDDTPQ (151 aa)). 432–439 (GPPNSGKS) serves as a coordination point for ATP. K513 is covalently cross-linked (Glycyl lysine isopeptide (Lys-Gly) (interchain with G-Cter in SUMO)). Residues 578 to 604 (SDQEDEGENGESQRAFQCSAGSANEHL) form a disordered region. A compositionally biased stretch (polar residues) spans 587 to 604 (GESQRAFQCSAGSANEHL).

Belongs to the papillomaviridae E1 protein family. As to quaternary structure, can form hexamers. Interacts with E2 protein; this interaction increases E1 DNA binding specificity. Interacts with host DNA polymerase subunit POLA2. Interacts with host single stranded DNA-binding protein RPA1. Interacts with host TOP1; this interaction stimulates the enzymatic activity of TOP1. In terms of processing, phosphorylated. Sumoylated.

It is found in the host nucleus. It catalyses the reaction Couples ATP hydrolysis with the unwinding of duplex DNA by translocating in the 3'-5' direction.. The catalysed reaction is ATP + H2O = ADP + phosphate + H(+). ATP-dependent DNA 3'-5' helicase required for initiation of viral DNA replication. It forms a complex with the viral E2 protein. The E1-E2 complex binds to the replication origin which contains binding sites for both proteins. During the initial step, a dimer of E1 interacts with a dimer of protein E2 leading to a complex that binds the viral origin of replication with high specificity. Then, a second dimer of E1 displaces the E2 dimer in an ATP-dependent manner to form the E1 tetramer. Following this, two E1 monomers are added to each half of the site, which results in the formation of two E1 trimers on the viral ori. Subsequently, two hexamers will be created. The double hexamer acts as a bi-directional helicase machinery and unwinds the viral DNA and then recruits the host DNA polymerase to start replication. This chain is Replication protein E1, found in Homo sapiens (Human).